We begin with the raw amino-acid sequence, 110 residues long: UPF0145 protein MTH_507 (110 aa).

The protein belongs to the UPF0145 family.

The protein is UPF0145 protein MTH_507 of Methanothermobacter thermautotrophicus (strain ATCC 29096 / DSM 1053 / JCM 10044 / NBRC 100330 / Delta H) (Methanobacterium thermoautotrophicum).